The sequence spans 315 residues: MVSASGTSFFKGMLLGSISWVLITMFGQIHIRHRGQTQDHEHHHLRPPNRNDFLNTSKVILLELSKSIRVFCIIFGESEDESYWAVLKETWTKHCDKAELYDTKNDNLFNIESNDRWVQMRTAYKYVFEKYGDNYNWFFLALPTTFAVIENLKYLLFTRDASQPFYLGHTVIFGDLEYVTVEGGIVLSRELMKRLNRLLDNSETCADQSVIWKLSEDKQLAICLKYAGVHAENAEDYEGRDVFNTKPIAQLIEEALSNNPQQVVEGCCSDMAITFNGLTPQKMEVMMYGLYRLRAFGHYFNDTLVFLPPVGSEND.

Residues 1–8 (MVSASGTS) lie on the Cytoplasmic side of the membrane. Residues 9 to 29 (FFKGMLLGSISWVLITMFGQI) form a helical; Signal-anchor for type II membrane protein membrane-spanning segment. At 30–315 (HIRHRGQTQD…FLPPVGSEND (286 aa)) the chain is on the lumenal side. Asparagine 55 and asparagine 301 each carry an N-linked (GlcNAc...) asparagine glycan.

This sequence belongs to the glycosyltransferase 31 family. Beta3-Gal-T subfamily.

The protein resides in the membrane. This Homo sapiens (Human) protein is C1GALT1-specific chaperone 1-like protein.